The chain runs to 556 residues: Peptidylarginine deiminase (556 aa).

The first 23 residues, 1-23 (MKKLLQAKALILALGLFQLPAIA), serve as a signal peptide directing secretion. Positions 24–43 (QTQMQADRTNGQFATEEMQR) are excised as a propeptide. Cysteine 351 (amidino-cysteine intermediate) is an active-site residue.

The protein belongs to the agmatine deiminase family. The cofactor is FAD. Requires FMN as cofactor.

Its subcellular location is the secreted. Its activity is regulated as follows. Inhibited by cysteine and TLCK. Inhibited by high concentration of thiourea and thio-L-citrulline. Deiminates the guanidino group of C-terminal arginine residues on a variety of peptides, including the vasoregulatory peptide-hormone bradykinin, to yield ammonia and a citrulline residue. May promote the growth of the pathogen in the periodontal pocket by producing ammonia, ammonia having a protective effect during acidic cleaning cycles in the mouth. The polypeptide is Peptidylarginine deiminase (Porphyromonas gingivalis (strain ATCC BAA-308 / W83)).